A 427-amino-acid chain; its full sequence is Enolase (427 aa).

Gln163 is a (2R)-2-phosphoglycerate binding site. Glu205 acts as the Proton donor in catalysis. Mg(2+) contacts are provided by Asp242, Glu285, and Asp312. 4 residues coordinate (2R)-2-phosphoglycerate: Lys337, Arg366, Ser367, and Lys388. Lys337 functions as the Proton acceptor in the catalytic mechanism.

It belongs to the enolase family. Requires Mg(2+) as cofactor.

It localises to the cytoplasm. The protein resides in the secreted. Its subcellular location is the cell surface. The catalysed reaction is (2R)-2-phosphoglycerate = phosphoenolpyruvate + H2O. It functions in the pathway carbohydrate degradation; glycolysis; pyruvate from D-glyceraldehyde 3-phosphate: step 4/5. In terms of biological role, catalyzes the reversible conversion of 2-phosphoglycerate (2-PG) into phosphoenolpyruvate (PEP). It is essential for the degradation of carbohydrates via glycolysis. This Rhodopseudomonas palustris (strain ATCC BAA-98 / CGA009) protein is Enolase.